Here is a 616-residue protein sequence, read N- to C-terminus: Dihydroxy-acid dehydratase (616 aa).

Asp-81 contributes to the Mg(2+) binding site. Residue Cys-122 participates in [2Fe-2S] cluster binding. Positions 123 and 124 each coordinate Mg(2+). Lys-124 is subject to N6-carboxylysine. Cys-195 is a [2Fe-2S] cluster binding site. Glu-491 lines the Mg(2+) pocket. The active-site Proton acceptor is Ser-517.

It belongs to the IlvD/Edd family. In terms of assembly, homodimer. [2Fe-2S] cluster serves as cofactor. The cofactor is Mg(2+).

It carries out the reaction (2R)-2,3-dihydroxy-3-methylbutanoate = 3-methyl-2-oxobutanoate + H2O. The enzyme catalyses (2R,3R)-2,3-dihydroxy-3-methylpentanoate = (S)-3-methyl-2-oxopentanoate + H2O. The protein operates within amino-acid biosynthesis; L-isoleucine biosynthesis; L-isoleucine from 2-oxobutanoate: step 3/4. It functions in the pathway amino-acid biosynthesis; L-valine biosynthesis; L-valine from pyruvate: step 3/4. Functionally, functions in the biosynthesis of branched-chain amino acids. Catalyzes the dehydration of (2R,3R)-2,3-dihydroxy-3-methylpentanoate (2,3-dihydroxy-3-methylvalerate) into 2-oxo-3-methylpentanoate (2-oxo-3-methylvalerate) and of (2R)-2,3-dihydroxy-3-methylbutanoate (2,3-dihydroxyisovalerate) into 2-oxo-3-methylbutanoate (2-oxoisovalerate), the penultimate precursor to L-isoleucine and L-valine, respectively. The sequence is that of Dihydroxy-acid dehydratase from Yersinia pseudotuberculosis serotype O:3 (strain YPIII).